The chain runs to 691 residues: Putative calcium up-regulated protein I (691 aa).

Residues 47-174 enclose the Ricin B-type lectin domain; that stretch reads SNCYLKEKPQ…NYTSQIWTYN (128 aa).

The protein belongs to the cup family.

In Dictyostelium discoideum (Social amoeba), this protein is Putative calcium up-regulated protein I (cupI).